We begin with the raw amino-acid sequence, 481 residues long: Cysteine--tRNA ligase (481 aa).

Cys29 contacts Zn(2+). The 'HIGH' region signature appears at 31-41; that stretch reads VTVYDYCHIGH. Zn(2+)-binding residues include Cys209, His234, and Glu238. A 'KMSKS' region motif is present at residues 266 to 270; sequence KMSKS. Lys269 contributes to the ATP binding site.

Belongs to the class-I aminoacyl-tRNA synthetase family. As to quaternary structure, monomer. Zn(2+) serves as cofactor.

It is found in the cytoplasm. The enzyme catalyses tRNA(Cys) + L-cysteine + ATP = L-cysteinyl-tRNA(Cys) + AMP + diphosphate. The sequence is that of Cysteine--tRNA ligase from Syntrophotalea carbinolica (strain DSM 2380 / NBRC 103641 / GraBd1) (Pelobacter carbinolicus).